The chain runs to 434 residues: UDP-N-acetylglucosamine 1-carboxyvinyltransferase 1 (434 aa).

22 to 23 contacts phosphoenolpyruvate; it reads KN. A UDP-N-acetyl-alpha-D-glucosamine-binding site is contributed by Arg-93. Cys-117 serves as the catalytic Proton donor. Cys-117 bears the 2-(S-cysteinyl)pyruvic acid O-phosphothioketal mark. UDP-N-acetyl-alpha-D-glucosamine contacts are provided by residues 122 to 126, Asp-306, and Val-328; that span reads RPIDQ.

Belongs to the EPSP synthase family. MurA subfamily.

It is found in the cytoplasm. It catalyses the reaction phosphoenolpyruvate + UDP-N-acetyl-alpha-D-glucosamine = UDP-N-acetyl-3-O-(1-carboxyvinyl)-alpha-D-glucosamine + phosphate. It functions in the pathway cell wall biogenesis; peptidoglycan biosynthesis. In terms of biological role, cell wall formation. Adds enolpyruvyl to UDP-N-acetylglucosamine. The protein is UDP-N-acetylglucosamine 1-carboxyvinyltransferase 1 of Bacillus cereus (strain ATCC 14579 / DSM 31 / CCUG 7414 / JCM 2152 / NBRC 15305 / NCIMB 9373 / NCTC 2599 / NRRL B-3711).